The following is a 157-amino-acid chain: Succinate dehydrogenase assembly factor 2-A, mitochondrial (157 aa).

The transit peptide at 1-21 (MLRQVLSSTSVRRLLVSPTRC) directs the protein to the mitochondrion.

The protein belongs to the SDHAF2 family. Interacts with the flavoprotein subunit within the SDH catalytic dimer.

The protein resides in the mitochondrion matrix. Its function is as follows. Plays an essential role in the assembly of succinate dehydrogenase (SDH), an enzyme complex (also referred to as respiratory complex II) that is a component of both the tricarboxylic acid (TCA) cycle and the mitochondrial electron transport chain, and which couples the oxidation of succinate to fumarate with the reduction of ubiquinone (coenzyme Q) to ubiquinol. Required for flavinylation (covalent attachment of FAD) of the flavoprotein subunit of the SDH catalytic dimer. In Drosophila mojavensis (Fruit fly), this protein is Succinate dehydrogenase assembly factor 2-A, mitochondrial.